We begin with the raw amino-acid sequence, 85 residues long: Cell division topological specificity factor (85 aa).

Belongs to the MinE family.

Its function is as follows. Prevents the cell division inhibition by proteins MinC and MinD at internal division sites while permitting inhibition at polar sites. This ensures cell division at the proper site by restricting the formation of a division septum at the midpoint of the long axis of the cell. In Shewanella oneidensis (strain ATCC 700550 / JCM 31522 / CIP 106686 / LMG 19005 / NCIMB 14063 / MR-1), this protein is Cell division topological specificity factor.